A 304-amino-acid polypeptide reads, in one-letter code: Recombination-associated protein RdgC (304 aa).

It belongs to the RdgC family.

It localises to the cytoplasm. Its subcellular location is the nucleoid. In terms of biological role, may be involved in recombination. This chain is Recombination-associated protein RdgC, found in Shewanella sp. (strain MR-4).